We begin with the raw amino-acid sequence, 1391 residues long: Eukaryotic translation initiation factor 3 subunit A (1391 aa).

The PCI domain occupies 315–498; sequence MQRMSTRVLL…RTLSFGSDLN (184 aa). 6 stretches are compositionally biased toward basic and acidic residues: residues 809-921, 940-959, 966-1234, 1246-1257, 1265-1307, and 1313-1380; these read DKEE…RGGP, AALR…EKVS, EKGG…RDQT, GWREREKAREDS, QAPE…ETPR, and DSDR…IKPE. The segment at 809–1391 is disordered; that stretch reads DKEEEEERLR…DEDGWTTVRR (583 aa). 2 consecutive repeat copies span residues 973–982 and 983–992. Residues 973–1229 form a 26 X 10 AA approximate tandem repeats of [DE]-[DE]-[DE]-R-[GATV]-[PS]-[KRW]-R-G-[AEFGIL] region; that stretch reads DEDRGPKRGL…DDDRGPRRGE (257 aa). A 3; approximate repeat occupies 993–1001; the sequence is DDAGPRRGF. 20 repeat units span residues 1002 to 1011, 1012 to 1021, 1022 to 1031, 1032 to 1041, 1042 to 1051, 1052 to 1061, 1062 to 1071, 1072 to 1081, 1082 to 1091, 1092 to 1101, 1102 to 1111, 1112 to 1120, 1122 to 1131, 1132 to 1141, 1142 to 1151, 1152 to 1161, 1162 to 1171, 1172 to 1181, 1182 to 1191, and 1192 to 1201. Residues 1202–1209 form a 24; approximate repeat; sequence DDVPRRGA. A run of 2 repeats spans residues 1210–1219 and 1220–1229.

This sequence belongs to the eIF-3 subunit A family. Component of the eukaryotic translation initiation factor 3 (eIF-3) complex, which is composed of 13 subunits: eif3a, eif3b, eif3c, eif3d, eif3e, eif3f, eif3g, eif3h, eif3i, eif3j, eif3k, eif3l and eif3m.

Its subcellular location is the cytoplasm. Its function is as follows. RNA-binding component of the eukaryotic translation initiation factor 3 (eIF-3) complex, which is involved in protein synthesis of a specialized repertoire of mRNAs and, together with other initiation factors, stimulates binding of mRNA and methionyl-tRNAi to the 40S ribosome. The eIF-3 complex specifically targets and initiates translation of a subset of mRNAs involved in cell proliferation. The sequence is that of Eukaryotic translation initiation factor 3 subunit A (eif3a) from Xenopus tropicalis (Western clawed frog).